A 469-amino-acid chain; its full sequence is Spermatogenesis-associated protein 21 (469 aa).

Disordered regions lie at residues 1–76 (MDNR…AGTQ) and 99–157 (HRRA…MGAP). The span at 49–61 (EVRDIGERREPDR) shows a compositional bias: basic and acidic residues. Positions 62–73 (AQQQPQKPAVAA) are enriched in low complexity. Polar residues predominate over residues 105–132 (ARSQTAQKSPRTLTPVPTSAPSLPQTPA). The span at 146–157 (APGPEPAPMGAP) shows a compositional bias: pro residues. Positions 198 to 225 (EPEEQSLQKLYQNREKSEEQLTLKQEEA) form a coiled coil. The EF-hand domain occupies 255–290 (VTLAQVEDALMSADVNGDGRVDFKDFLAVMTDTRRF). Residues Asp-268, Asn-270, Asp-272, Arg-274, and Asp-279 each contribute to the Ca(2+) site. The disordered stretch occupies residues 424–469 (YALDQCTPPGLDPDIRSPFFQSGSQGNREHNSDSRKWLSSVPARTH). Residues 450–459 (NREHNSDSRK) are compositionally biased toward basic and acidic residues.

In terms of biological role, involved in the differentiation of haploid spermatids. In Homo sapiens (Human), this protein is Spermatogenesis-associated protein 21 (SPATA21).